The sequence spans 203 residues: MSRNEVLLNGDINFKEVRCVGDNGEVYGIISSKEALKIAQNLGLDLVLISASAKPPVCKVMDYNKFRYQNEKKIKEAKKKQKQIEIKEIKLSTQIAQNDINYKVKHAREFIESNKHVKFKVVLKGRESQNSKAGLDVLFRVQTMMQDLANPEKEPKTEGRFVSWMFVPKAKEAPKNEKKTKENNPPFNRINLMKGENHAKNED.

A compositionally biased stretch (basic and acidic residues) spans 172 to 182 (EAPKNEKKTKE). The interval 172-203 (EAPKNEKKTKENNPPFNRINLMKGENHAKNED) is disordered.

This sequence belongs to the IF-3 family. As to quaternary structure, monomer.

It is found in the cytoplasm. IF-3 binds to the 30S ribosomal subunit and shifts the equilibrium between 70S ribosomes and their 50S and 30S subunits in favor of the free subunits, thus enhancing the availability of 30S subunits on which protein synthesis initiation begins. This chain is Translation initiation factor IF-3, found in Helicobacter pylori (strain J99 / ATCC 700824) (Campylobacter pylori J99).